Consider the following 1299-residue polypeptide: Sophorolipid transporter (1299 aa).

The Cytoplasmic portion of the chain corresponds to 1-64 (MVDDIQVEKR…FCTPLDVFLE (64 aa)). The helical transmembrane segment at 65–85 (ILALFFAAVHGAALPMFTLVV) threads the bilayer. Residues 65-356 (ILALFFAAVH…IAPNVRFLVK (292 aa)) enclose the ABC transmembrane type-1 1 domain. Residues 86–114 (GAIFNTFRDFTSYDLKGNEFQHKVNHLSL) are Extracellular-facing. A helical transmembrane segment spans residues 115 to 135 (YFVYIGIGMLGSAFLESFLLV). The Cytoplasmic segment spans residues 136–187 (DRGEVLAGRYRKHYLSAVIRQNIAFYDKLGGGEVSTRIINDTNSIQEAISDK). The chain crosses the membrane as a helical span at residues 188-208 (LGNVVQGIASFIAATVISFAS). The Extracellular segment spans residues 209–214 (QWKLAC). A helical transmembrane segment spans residues 215-235 (ILLSAVGFMVITMGTGATFMA). Over 236 to 293 (KYQLRSDAIYSQSGATVAEEALSAVRTTVAFGAQPHLAVKYEKVLDRVVKESKRSSYS) the chain is Cytoplasmic. Residues 294–314 (LGVMLACIWASTFWVYALALW) form a helical membrane-spanning segment. At 315 to 326 (QGSREIVSGSAD) the chain is on the extracellular side. Residues 327 to 347 (VGKIIVVITAMLLGSFQLGNI) form a helical membrane-spanning segment. At 348 to 725 (APNVRFLVKG…WGLNRKEWGY (378 aa)) the chain is on the cytoplasmic side. The ABC transporter 1 domain maps to 393–638 (IELKNVKFRY…EGPYKALVDA (246 aa)). 428–435 (GASGSGKS) contacts ATP. Positions 681–690 (SAGTQTTQPP) are enriched in polar residues. Residues 681–703 (SAGTQTTQPPEYQENDIPGVRNP) form a disordered region. A helical membrane pass occupies residues 726 to 746 (ILIGSLASIILGYCYPAMAII). The ABC transmembrane type-1 2 domain maps to 727–1016 (LIGSLASIIL…IFSYAPNMNS (290 aa)). Residues 747 to 769 (TGQTTGSMVLPPSEYGKMRHVVN) are Extracellular-facing. Residues 770–790 (IMGWWYFFVGCISFMTAFITI) traverse the membrane as a helical segment. Residues 791 to 848 (AALSLASDKLVKNIRLALFRQLMRMDIAFFDHKNNTPGALTSILAKEAKMIEGLSGAT) are Cytoplasmic-facing. Residues 849 to 869 (LGQIQQSLVTLIGGIVTGIPF) traverse the membrane as a helical segment. Topologically, residues 870 to 874 (NWRIG) are extracellular. The helical transmembrane segment at 875–895 (LVATSVVPVMLVCGFVRVWVL) threads the bilayer. At 896-954 (TQLSDRAREVYERSGSMASEYTSAVRTVQSLTRELDVVVKYTKTVDSQIFSSRIAIARS) the chain is on the cytoplasmic side. The helical transmembrane segment at 955 to 975 (ALYYALSEGMTPWVVALVFWW) threads the bilayer. Residues 976 to 987 (GSTVMRRGEASV) lie on the Extracellular side of the membrane. Residues 988 to 1008 (AGYMTVFMAIITGSQAAGQIF) traverse the membrane as a helical segment. Over 1009 to 1299 (SYAPNMNSAK…LVNLQGLGEI (291 aa)) the chain is Cytoplasmic. The ABC transporter 2 domain maps to 1053–1293 (IEFRHVNFRY…NGWYAELVNL (241 aa)). An ATP-binding site is contributed by 1088-1095 (GASGCGKS).

The protein belongs to the ABC transporter superfamily. ABCB family. Multidrug resistance exporter (TC 3.A.1.201) subfamily.

It localises to the cell membrane. Functionally, transports acidic acylated and non-acylated sophorolipids (SLs) into the extracellular space, where they can be lactonized by lactone esterase. This Starmerella bombicola (Yeast) protein is Sophorolipid transporter (mdr).